The chain runs to 689 residues: DNA ligase (689 aa).

Residues 51 to 55 (DSEYD), 100 to 101 (SL), and Glu129 contribute to the NAD(+) site. Lys131 serves as the catalytic N6-AMP-lysine intermediate. Positions 152, 189, 308, and 332 each coordinate NAD(+). 4 residues coordinate Zn(2+): Cys426, Cys429, Cys444, and Cys450. Positions 609–689 (ADEQPLKGQT…ELLALLAANR (81 aa)) constitute a BRCT domain.

The protein belongs to the NAD-dependent DNA ligase family. LigA subfamily. Mg(2+) serves as cofactor. The cofactor is Mn(2+).

It catalyses the reaction NAD(+) + (deoxyribonucleotide)n-3'-hydroxyl + 5'-phospho-(deoxyribonucleotide)m = (deoxyribonucleotide)n+m + AMP + beta-nicotinamide D-nucleotide.. DNA ligase that catalyzes the formation of phosphodiester linkages between 5'-phosphoryl and 3'-hydroxyl groups in double-stranded DNA using NAD as a coenzyme and as the energy source for the reaction. It is essential for DNA replication and repair of damaged DNA. The polypeptide is DNA ligase (Shewanella oneidensis (strain ATCC 700550 / JCM 31522 / CIP 106686 / LMG 19005 / NCIMB 14063 / MR-1)).